The sequence spans 427 residues: MDSVNIARRPTRLVRVGHVLVGSDAPVMVQSMTNTDTADAAGTAEQVYQLAQAGSEVVRITVNSPEAAARVAEIRQRLDDLGCDVPLVGDFHFNGDRLLKEFPDCARALAKYRINPGNVGKGAKGDDKFAFMIRTAMEHDKAVRIGVNWGSLDQALLARMMDANNRAANPLPLPKLMQEALIVSALESAEKAVEIGLSPDNIILSCKVSNVQDLISVYRELGGRCDYPLHLGLTEAGMGSKGIVASSAALAVLLQEGIGDTIRISLTPQPGEARTKEVVVAQELLQTMGLRSFTPLVTACPGCGRTTSTFFQELADHIQSYLRERMPVWRLQYPGVEDMKVAVMGCVVNGPGESKLADIGISLPGTGEVPVAPVYVDGQKDVTLKGDNIPAEFTAIVDNYVKTRYGEGGAKRREVASRTIPIRPVKA.

4 residues coordinate [4Fe-4S] cluster: C300, C303, C346, and E353.

The protein belongs to the IspG family. Requires [4Fe-4S] cluster as cofactor.

The enzyme catalyses (2E)-4-hydroxy-3-methylbut-2-enyl diphosphate + oxidized [flavodoxin] + H2O + 2 H(+) = 2-C-methyl-D-erythritol 2,4-cyclic diphosphate + reduced [flavodoxin]. The protein operates within isoprenoid biosynthesis; isopentenyl diphosphate biosynthesis via DXP pathway; isopentenyl diphosphate from 1-deoxy-D-xylulose 5-phosphate: step 5/6. Converts 2C-methyl-D-erythritol 2,4-cyclodiphosphate (ME-2,4cPP) into 1-hydroxy-2-methyl-2-(E)-butenyl 4-diphosphate. This is 4-hydroxy-3-methylbut-2-en-1-yl diphosphate synthase (flavodoxin) from Chromobacterium violaceum (strain ATCC 12472 / DSM 30191 / JCM 1249 / CCUG 213 / NBRC 12614 / NCIMB 9131 / NCTC 9757 / MK).